The sequence spans 202 residues: Ras-related protein Rab-18 (202 aa).

GTP-binding residues include S20, G23, K24, S25, S26, D37, P38, T43, G69, K126, D128, and A155. An Effector region motif is present at residues 40–48; sequence QAATIGVDF. The tract at residues 183-202 is disordered; that stretch reads RPTFRLGQPTDTSSGNLCGC. Positions 191–202 are enriched in polar residues; that stretch reads PTDTSSGNLCGC. 2 S-geranylgeranyl cysteine lipidation sites follow: C200 and C202. Position 202 is a cysteine methyl ester (C202).

Belongs to the small GTPase superfamily. Rab family.

The catalysed reaction is GTP + H2O = GDP + phosphate + H(+). Functionally, the small GTPases Rab are key regulators of intracellular membrane trafficking, from the formation of transport vesicles to their fusion with membranes. Rabs cycle between an inactive GDP-bound form and an active GTP-bound form that is able to recruit to membranes different sets of downstream effectors directly responsible for vesicle formation, movement, tethering and fusion. Plays a role in apical endocytosis/recycling. May be implicated in transport between the plasma membrane and early endosomes. The sequence is that of Ras-related protein Rab-18 (rab-18) from Caenorhabditis briggsae.